A 527-amino-acid polypeptide reads, in one-letter code: DNA damage-binding protein cmr1 (527 aa).

The segment at 35-90 (AGLFPPKSARSSPGGLTKPKKKPAPKKVKKEDEDLVPRRMSSRLRGLAADSEVAKR) is disordered. The segment covering 52 to 62 (KPKKKPAPKKV) has biased composition (basic residues). 7 WD repeats span residues 185 to 226 (LTPE…PISA), 249 to 289 (PHTR…SVEK), 296 to 336 (SDDI…RSAV), 341 to 381 (LSEK…HDEP), 388 to 427 (VSRL…AAWK), 450 to 493 (GRWV…LAQL), and 496 to 527 (DGIT…CLWM). The tract at residues 284–303 (TTSVEKYAPESTSDDIPISG) is disordered.

Belongs to the WD repeat DDB2/WDR76 family.

Its function is as follows. DNA-binding protein that binds to both single- and double-stranded DNA. Binds preferentially to UV-damaged DNA. May be involved in DNA-metabolic processes. The protein is DNA damage-binding protein cmr1 of Neosartorya fischeri (strain ATCC 1020 / DSM 3700 / CBS 544.65 / FGSC A1164 / JCM 1740 / NRRL 181 / WB 181) (Aspergillus fischerianus).